The chain runs to 543 residues: CTP synthase (543 aa).

Residues 1–265 (MTRYIFVTGG…DDFVVERFGL (265 aa)) form an amidoligase domain region. Ser13 serves as a coordination point for CTP. UTP is bound at residue Ser13. Residues 14-19 (SLGKGI) and Asp71 contribute to the ATP site. Mg(2+)-binding residues include Asp71 and Glu139. Residues 146-148 (DIE), 186-191 (KTKPTQ), and Lys222 each bind CTP. UTP is bound by residues 186–191 (KTKPTQ) and Lys222. A Glutamine amidotransferase type-1 domain is found at 290–541 (TIAMVGKYME…VKAALAQHQK (252 aa)). L-glutamine is bound at residue Gly351. The Nucleophile; for glutamine hydrolysis role is filled by Cys378. L-glutamine is bound by residues 379 to 382 (LGMQ), Glu402, and Arg469. Catalysis depends on residues His514 and Glu516.

It belongs to the CTP synthase family. As to quaternary structure, homotetramer.

The enzyme catalyses UTP + L-glutamine + ATP + H2O = CTP + L-glutamate + ADP + phosphate + 2 H(+). It catalyses the reaction L-glutamine + H2O = L-glutamate + NH4(+). It carries out the reaction UTP + NH4(+) + ATP = CTP + ADP + phosphate + 2 H(+). It participates in pyrimidine metabolism; CTP biosynthesis via de novo pathway; CTP from UDP: step 2/2. Allosterically activated by GTP, when glutamine is the substrate; GTP has no effect on the reaction when ammonia is the substrate. The allosteric effector GTP functions by stabilizing the protein conformation that binds the tetrahedral intermediate(s) formed during glutamine hydrolysis. Inhibited by the product CTP, via allosteric rather than competitive inhibition. Its function is as follows. Catalyzes the ATP-dependent amination of UTP to CTP with either L-glutamine or ammonia as the source of nitrogen. Regulates intracellular CTP levels through interactions with the four ribonucleotide triphosphates. This chain is CTP synthase, found in Pseudomonas fluorescens (strain Pf0-1).